The chain runs to 142 residues: Large ribosomal subunit protein uL13 (142 aa).

This sequence belongs to the universal ribosomal protein uL13 family. Part of the 50S ribosomal subunit.

This protein is one of the early assembly proteins of the 50S ribosomal subunit, although it is not seen to bind rRNA by itself. It is important during the early stages of 50S assembly. In Koribacter versatilis (strain Ellin345), this protein is Large ribosomal subunit protein uL13.